Reading from the N-terminus, the 522-residue chain is Na(+)/H(+) antiporter NhaB (522 aa).

The next 9 helical transmembrane spans lie at 13-33 (FLGN…IINP), 98-118 (LLLV…LFVF), 140-160 (AFLS…SVSV), 239-259 (FFIR…LVCL), 304-324 (AIIG…LVGL), 356-376 (LTVF…TPII), 390-410 (LFYL…VGTV), 446-466 (ATPN…APLI), and 477-497 (ALPY…FLLV).

It belongs to the NhaB Na(+)/H(+) (TC 2.A.34) antiporter family.

It localises to the cell inner membrane. It catalyses the reaction 2 Na(+)(in) + 3 H(+)(out) = 2 Na(+)(out) + 3 H(+)(in). Its function is as follows. Na(+)/H(+) antiporter that extrudes sodium in exchange for external protons. This is Na(+)/H(+) antiporter NhaB from Yersinia pestis bv. Antiqua (strain Angola).